A 92-amino-acid chain; its full sequence is RIIa domain-containing protein 1 (92 aa).

An RIIa domain is found at 43–77 (KEVELLISGFFREMFLKRPDNIPEFAADYFTDPRL).

This Bos taurus (Bovine) protein is RIIa domain-containing protein 1 (RIIAD1).